The chain runs to 226 residues: Uracil phosphoribosyltransferase (226 aa).

36-40 (KGLVK) is a GTP binding site. Residues Arg-86, Arg-111, and 145–153 (DPMLATGST) contribute to the 5-phospho-alpha-D-ribose 1-diphosphate site. Uracil-binding positions include Ile-211 and 216–218 (GDA). Residue Asp-217 coordinates 5-phospho-alpha-D-ribose 1-diphosphate.

This sequence belongs to the UPRTase family. Mg(2+) serves as cofactor.

The enzyme catalyses UMP + diphosphate = 5-phospho-alpha-D-ribose 1-diphosphate + uracil. It functions in the pathway pyrimidine metabolism; UMP biosynthesis via salvage pathway; UMP from uracil: step 1/1. With respect to regulation, allosterically activated by GTP. Functionally, catalyzes the conversion of uracil and 5-phospho-alpha-D-ribose 1-diphosphate (PRPP) to UMP and diphosphate. The sequence is that of Uracil phosphoribosyltransferase from Haloquadratum walsbyi (strain DSM 16790 / HBSQ001).